The chain runs to 555 residues: Glucose-6-phosphate isomerase (555 aa).

D-glucose 6-phosphate contacts are provided by residues 169–170 (GS), 219–224 (SKTFTT), glutamine 364, glutamate 368, histidine 399, and lysine 521. Catalysis depends on glutamate 368, which acts as the Proton donor. Active-site residues include histidine 399 and lysine 521.

This sequence belongs to the GPI family. In terms of assembly, homodimer.

Its subcellular location is the cytoplasm. The protein resides in the cytosol. It catalyses the reaction alpha-D-glucose 6-phosphate = beta-D-fructose 6-phosphate. Its pathway is carbohydrate degradation; glycolysis; D-glyceraldehyde 3-phosphate and glycerone phosphate from D-glucose: step 2/4. Its function is as follows. In the cytoplasm, catalyzes the conversion of glucose-6-phosphate to fructose-6-phosphate, the second step in glycolysis, and the reverse reaction during gluconeogenesis. This chain is Glucose-6-phosphate isomerase (PGI1), found in Eremothecium gossypii (strain ATCC 10895 / CBS 109.51 / FGSC 9923 / NRRL Y-1056) (Yeast).